The chain runs to 547 residues: Chaperonin GroEL (547 aa).

ATP contacts are provided by residues 30–33, K51, 87–91, G415, and D495; these read TLGP and DGTTT.

Belongs to the chaperonin (HSP60) family. Forms a cylinder of 14 subunits composed of two heptameric rings stacked back-to-back. Interacts with the co-chaperonin GroES.

It localises to the cytoplasm. The enzyme catalyses ATP + H2O + a folded polypeptide = ADP + phosphate + an unfolded polypeptide.. Its function is as follows. Together with its co-chaperonin GroES, plays an essential role in assisting protein folding. The GroEL-GroES system forms a nano-cage that allows encapsulation of the non-native substrate proteins and provides a physical environment optimized to promote and accelerate protein folding. This Shewanella halifaxensis (strain HAW-EB4) protein is Chaperonin GroEL.